A 343-amino-acid chain; its full sequence is Shematrin-like protein 3 (343 aa).

The first 16 residues, 1–16, serve as a signal peptide directing secretion; that stretch reads MLKLVCAVVLIATVNA.

In terms of tissue distribution, prismatic layer of shell (at protein level).

It is found in the secreted. The protein is Shematrin-like protein 3 of Pinctada maxima (Silver-lipped pearl oyster).